The sequence spans 200 residues: Putative HTH-type transcriptional regulator YhjB (200 aa).

The region spanning 135–200 is the HTH luxR-type domain; that stretch reads DIKDLKSLSA…QAAMMLNISS (66 aa). Positions 159–178 form a DNA-binding region, H-T-H motif; sequence NKEIGRALNISTGTVKAHLE.

This is Putative HTH-type transcriptional regulator YhjB (yhjB) from Escherichia coli (strain K12).